Consider the following 58-residue polypeptide: Glutathione reductase (58 aa).

The FAD site is built by glutamate 5, threonine 12, cysteine 13, and lysine 21. A disulfide bond links cysteine 13 and cysteine 18.

Belongs to the class-I pyridine nucleotide-disulfide oxidoreductase family. Homodimer. FAD serves as cofactor.

Its subcellular location is the cytoplasm. It carries out the reaction 2 glutathione + NADP(+) = glutathione disulfide + NADPH + H(+). In terms of biological role, catalyzes the reduction of glutathione disulfide (GSSG) to reduced glutathione (GSH). Constitutes the major mechanism to maintain a high GSH:GSSG ratio in the cytosol. This Spirulina sp protein is Glutathione reductase.